An 89-amino-acid polypeptide reads, in one-letter code: Small ribosomal subunit protein uS17 (89 aa).

Belongs to the universal ribosomal protein uS17 family. Part of the 30S ribosomal subunit.

One of the primary rRNA binding proteins, it binds specifically to the 5'-end of 16S ribosomal RNA. The polypeptide is Small ribosomal subunit protein uS17 (Azoarcus sp. (strain BH72)).